We begin with the raw amino-acid sequence, 172 residues long: METKMTGTNGSVDSIVFDKPTVEDGADMWELVKNSTLDLNSSYKYIMMCEFFAETCVVAKENDELVGFVTAFIPPEKQDTVFVWQVGVDTSQRGKGLASRLLNALLERDVCENVLYLEATITPSNEASQALFKKLAQKRETEVTVSECFTEDLFPDDEHEEELTFRIGPFTK.

In terms of domain architecture, N-acetyltransferase spans I15 to R166.

This sequence belongs to the acetyltransferase family. EctA subfamily.

The catalysed reaction is L-2,4-diaminobutanoate + acetyl-CoA = (2S)-4-acetamido-2-aminobutanoate + CoA + H(+). The protein operates within amine and polyamine biosynthesis; ectoine biosynthesis; L-ectoine from L-aspartate 4-semialdehyde: step 2/3. Its function is as follows. Catalyzes the acetylation of L-2,4-diaminobutyrate (DABA) to gamma-N-acetyl-alpha,gamma-diaminobutyric acid (ADABA) with acetyl coenzyme A. This chain is L-2,4-diaminobutyric acid acetyltransferase (ectA), found in Marinococcus halophilus.